The primary structure comprises 129 residues: Glycine cleavage system H protein (129 aa).

The region spanning Ser-23 to Lys-104 is the Lipoyl-binding domain. Lys-64 carries the N6-lipoyllysine modification.

Belongs to the GcvH family. In terms of assembly, the glycine cleavage system is composed of four proteins: P, T, L and H. Requires (R)-lipoate as cofactor.

Its function is as follows. The glycine cleavage system catalyzes the degradation of glycine. The H protein shuttles the methylamine group of glycine from the P protein to the T protein. The protein is Glycine cleavage system H protein of Thiobacillus denitrificans (strain ATCC 25259 / T1).